A 438-amino-acid chain; its full sequence is MQKENKQLCLISLGCSKNLVDSEVMLGKLYNYTLTNDAKSADVILINTCGFIESAKQESIQTILNAAKDKKEGTLLIASGCLSERYKDEIKELIPEVDIFTGVGDYDKIDILIAKKQNQFSEQVFLSEHYNARVITGSSVHAYVKISEGCNQKCSFCAIPSFKGKLHSRELDSILKEVEDLVLKGYKDMTFIAQDSSSFLYDKGQKDGLIQLISAIDKQQALRSARILYLYPSSTTLELIGAIENSPIFQNYFDMPIQHISDSMLKKMRRNSSQAHHLKLLNAMKQVQESFIRSTIIVGHPEENEGEFEELSAFLDEFQFDRLNIFAFSAEENTHAYSLEKVPKKIINARIKALNKIALKHQHNSFKALLNKPIKALVENKEGEYFYKARDLRWAPEVDGEILINDSELNTPLKPGHYTIVPSAFKDNILLAKVLSPF.

In terms of domain architecture, MTTase N-terminal spans 6 to 118 (KQLCLISLGC…IDILIAKKQN (113 aa)). [4Fe-4S] cluster contacts are provided by cysteine 15, cysteine 49, cysteine 81, cysteine 150, cysteine 154, and cysteine 157. Positions 136 to 364 (TGSSVHAYVK…NKIALKHQHN (229 aa)) constitute a Radical SAM core domain.

The protein belongs to the methylthiotransferase family. RimO subfamily. The cofactor is [4Fe-4S] cluster.

It localises to the cytoplasm. It carries out the reaction L-aspartate(89)-[ribosomal protein uS12]-hydrogen + (sulfur carrier)-SH + AH2 + 2 S-adenosyl-L-methionine = 3-methylsulfanyl-L-aspartate(89)-[ribosomal protein uS12]-hydrogen + (sulfur carrier)-H + 5'-deoxyadenosine + L-methionine + A + S-adenosyl-L-homocysteine + 2 H(+). Catalyzes the methylthiolation of an aspartic acid residue of ribosomal protein uS12. The protein is Ribosomal protein uS12 methylthiotransferase RimO of Helicobacter acinonychis (strain Sheeba).